Reading from the N-terminus, the 93-residue chain is Integration host factor subunit beta (93 aa).

This sequence belongs to the bacterial histone-like protein family. As to quaternary structure, heterodimer of an alpha and a beta chain.

Functionally, this protein is one of the two subunits of integration host factor, a specific DNA-binding protein that functions in genetic recombination as well as in transcriptional and translational control. This Rhodospirillum centenum (strain ATCC 51521 / SW) protein is Integration host factor subunit beta.